Consider the following 537-residue polypeptide: CTP synthase (537 aa).

The segment at 1-267 (MAKYIFVTGG…DEYVIKRLNL (267 aa)) is amidoligase domain. A CTP-binding site is contributed by Ser-13. Ser-13 is a binding site for UTP. 14 to 19 (SLGKGI) contacts ATP. L-glutamine is bound at residue Tyr-54. Asp-71 lines the ATP pocket. Residues Asp-71 and Glu-141 each coordinate Mg(2+). CTP contacts are provided by residues 148–150 (DIE), 188–193 (KTKPTQ), and Lys-224. UTP contacts are provided by residues 188 to 193 (KTKPTQ) and Lys-224. 240 to 242 (RDV) provides a ligand contact to ATP. The region spanning 292-534 (EVALVGKYVD…VKAMLNLKIN (243 aa)) is the Glutamine amidotransferase type-1 domain. An L-glutamine-binding site is contributed by Gly-354. Residue Cys-381 is the Nucleophile; for glutamine hydrolysis of the active site. L-glutamine-binding positions include 382–385 (LGMQ), Glu-405, and Arg-462. Residues His-507 and Glu-509 contribute to the active site.

The protein belongs to the CTP synthase family. Homotetramer.

The catalysed reaction is UTP + L-glutamine + ATP + H2O = CTP + L-glutamate + ADP + phosphate + 2 H(+). It carries out the reaction L-glutamine + H2O = L-glutamate + NH4(+). The enzyme catalyses UTP + NH4(+) + ATP = CTP + ADP + phosphate + 2 H(+). It functions in the pathway pyrimidine metabolism; CTP biosynthesis via de novo pathway; CTP from UDP: step 2/2. With respect to regulation, allosterically activated by GTP, when glutamine is the substrate; GTP has no effect on the reaction when ammonia is the substrate. The allosteric effector GTP functions by stabilizing the protein conformation that binds the tetrahedral intermediate(s) formed during glutamine hydrolysis. Inhibited by the product CTP, via allosteric rather than competitive inhibition. Catalyzes the ATP-dependent amination of UTP to CTP with either L-glutamine or ammonia as the source of nitrogen. Regulates intracellular CTP levels through interactions with the four ribonucleotide triphosphates. In Caldanaerobacter subterraneus subsp. tengcongensis (strain DSM 15242 / JCM 11007 / NBRC 100824 / MB4) (Thermoanaerobacter tengcongensis), this protein is CTP synthase.